A 282-amino-acid chain; its full sequence is Putative SLC9B1-like protein SLC9B1P1 (282 aa).

Transmembrane regions (helical) follow at residues 27–47 (LLAI…GGMI), 51–71 (IASL…GFFV), 87–107 (GFLV…IGLH), 135–155 (IITN…GAEV), 174–194 (LALC…GFSF), 198–218 (IFIA…GPLA), and 239–259 (VAFL…GILG).

Belongs to the monovalent cation:proton antiporter 1 (CPA1) transporter (TC 2.A.36) family.

The protein localises to the membrane. The chain is Putative SLC9B1-like protein SLC9B1P1 (SLC9B1P1) from Homo sapiens (Human).